A 147-amino-acid chain; its full sequence is Large ribosomal subunit protein uL16 (147 aa).

Basic residues predominate over residues 1–16 (MLMPKRVKRRRVHRGR). Positions 1 to 20 (MLMPKRVKRRRVHRGRMTGQ) are disordered.

The protein belongs to the universal ribosomal protein uL16 family. Part of the 50S ribosomal subunit.

Its function is as follows. Binds 23S rRNA and is also seen to make contacts with the A and possibly P site tRNAs. The chain is Large ribosomal subunit protein uL16 from Alkaliphilus metalliredigens (strain QYMF).